Here is a 414-residue protein sequence, read N- to C-terminus: CinA-like protein (414 aa).

It belongs to the CinA family.

In Acidobacterium capsulatum (strain ATCC 51196 / DSM 11244 / BCRC 80197 / JCM 7670 / NBRC 15755 / NCIMB 13165 / 161), this protein is CinA-like protein.